Reading from the N-terminus, the 333-residue chain is Transcription factor MYB36 (333 aa).

2 consecutive HTH myb-type domains span residues 9 to 62 (KANV…LNYL) and 63 to 117 (RPNI…KKKL). 2 consecutive DNA-binding regions (H-T-H motif) follow at residues 38-62 (WIALPQKIGLKRCGKSCRLRWLNYL) and 90-113 (WSIIAAQLPGRTDNDIKNYWNTKL). Residues 119 to 150 (GRQKQMNRQDSITDSTENNLSNNNNNKSPQNL) form a disordered region. A compositionally biased stretch (polar residues) spans 122-135 (KQMNRQDSITDSTE). Positions 136–150 (NNLSNNNNNKSPQNL) are enriched in low complexity.

As to expression, expressed in leaves, roots (endodermis-specific) and seedlings.

The protein localises to the nucleus. In terms of biological role, transcription factors that activates genes required for endodermal differentiation but represses genes involved in proliferative divisions, thus regulating the transition from proliferation to differentiation in root endodermis. Required for Casparian strip formation by positively regulating the expression of the Casparian strip genes CASP1, PER64 and ESB1 and other endodermis-specific genes, thus triggering correct localized lignin biosynthesis in root endodermis and subsequently regulating global ion homeostasis. This Arabidopsis thaliana (Mouse-ear cress) protein is Transcription factor MYB36.